Reading from the N-terminus, the 493-residue chain is GPI alpha-1,6-mannosyltransferase 2 (493 aa).

Residues 1–13 (MWPQDPSRKEVLR) lie on the Cytoplasmic side of the membrane. The helical transmembrane segment at 14–34 (FAVSCRILTLMLQALFNAIIP) threads the bilayer. The Lumenal portion of the chain corresponds to 35–77 (DHHAEAFSPPRLAPSGFVDQLVEGLLGGLSHWDAEHFLFIAEH). Residues 78 to 98 (GYLYEHNFAFFPGFPLALLVG) form a helical membrane-spanning segment. The Cytoplasmic portion of the chain corresponds to 99–113 (TELLRPLRGLLSLRS). A helical transmembrane segment spans residues 114-134 (CLLISVASLNFLFFMLAAVAL). Residues 135-136 (HD) are Lumenal-facing. The chain crosses the membrane as a helical span at residues 137–157 (LGCLVLHCPHQSFYAALLFCL). At 158 to 161 (SPAN) the chain is on the cytoplasmic side. The helical transmembrane segment at 162 to 182 (VFLAAGYSEALFALLTFSAMG) threads the bilayer. The Lumenal portion of the chain corresponds to 183–192 (QLERGRVWTS). A helical membrane pass occupies residues 193-213 (VLLFAFATGVRSNGLVSVGFL). Topologically, residues 214 to 234 (MHSQCQGFFSSLTMLNPLRQL) are cytoplasmic. A helical transmembrane segment spans residues 235–255 (FKLMASLFLSVFTLGLPFALF). The Lumenal segment spans residues 256–327 (QYYAYTQFCL…KYYELKQVPN (72 aa)). Residues 328–348 (FLLAAPVAILVAWATWTYVTT) traverse the membrane as a helical segment. Residues 349 to 378 (HPWLCLTLGLQRSKNNKTLEKPDLGFLSPQ) lie on the Cytoplasmic side of the membrane. Residues 379–399 (VFVYVVHAAVLLLFGGLCMHV) form a helical membrane-spanning segment. Residues 400-469 (QVLTRFLGSS…HWKTCSPVTR (70 aa)) lie on the Lumenal side of the membrane. A helical transmembrane segment spans residues 470–490 (YILGYFLTYWLLGLLLHCNFL). The Cytoplasmic portion of the chain corresponds to 491–493 (PWT).

The protein belongs to the PIGV family. Not N-glycosylated.

Its subcellular location is the endoplasmic reticulum membrane. It functions in the pathway glycolipid biosynthesis; glycosylphosphatidylinositol-anchor biosynthesis. Alpha-1,6-mannosyltransferase that catalyzes the transfer of the second mannose, via an alpha-1,6 bond, from a dolichol-phosphate-mannose (Dol-P-Man) to the alpha-D-Man-(1-&gt;4)-alpha-D-GlcN-(1-&gt;6)-(1-radyl,2-acyl-sn-glycero-3-phospho)-2-acyl-inositol (also termed H2) intermediate to generate an alpha-D-Man-(1-&gt;6)-alpha-D-Man-(1-&gt;4)-alpha-D-GlcN-(1-&gt;6)-(1-radyl,2-acyl-sn-glycero-3-phospho)-2-acyl-inositol (also termed H3) and participates in the seventh step of the glycosylphosphatidylinositol-anchor biosynthesis. Also transfers the second mannose on a 2-PEtn-alpha-D-Man-(1-&gt;4)-alpha-D-GlcN-(1-&gt;6)-(1-radyl,2-acyl-sn-glycero-3-phospho)-2-acyl-inositol (also termed H5). This is GPI alpha-1,6-mannosyltransferase 2 from Homo sapiens (Human).